Consider the following 149-residue polypeptide: MICLLQRVTHGSVSVSNETIGQISSGLVVLCGFQPHDTTESLEKMAHKLLHYRVFSDEDDKMNLNLQQAFSGKGGDLLLVPQFTLAADTKKGLRPSFHTSASPDLAHNLFNEFVALITLKFGPPQTGKFGANMQVSLINDGPVTFWLET.

The Gly-cisPro motif, important for rejection of L-amino acids motif lies at glycine 141 to proline 142.

It belongs to the DTD family. Homodimer.

The protein localises to the cytoplasm. The catalysed reaction is glycyl-tRNA(Ala) + H2O = tRNA(Ala) + glycine + H(+). The enzyme catalyses a D-aminoacyl-tRNA + H2O = a tRNA + a D-alpha-amino acid + H(+). Its function is as follows. An aminoacyl-tRNA editing enzyme that deacylates mischarged D-aminoacyl-tRNAs. Also deacylates mischarged glycyl-tRNA(Ala), protecting cells against glycine mischarging by AlaRS. Acts via tRNA-based rather than protein-based catalysis; rejects L-amino acids rather than detecting D-amino acids in the active site. By recycling D-aminoacyl-tRNA to D-amino acids and free tRNA molecules, this enzyme counteracts the toxicity associated with the formation of D-aminoacyl-tRNA entities in vivo and helps enforce protein L-homochirality. The protein is D-aminoacyl-tRNA deacylase of Hydrogenovibrio crunogenus (strain DSM 25203 / XCL-2) (Thiomicrospira crunogena).